The primary structure comprises 276 residues: Undecaprenyl-diphosphatase 2 (276 aa).

The next 7 membrane-spanning stretches (helical) occupy residues I3–P23, A48–F68, L92–E112, L119–A139, A196–I216, D225–V245, and I255–F275.

The protein belongs to the UppP family.

The protein resides in the cell membrane. It carries out the reaction di-trans,octa-cis-undecaprenyl diphosphate + H2O = di-trans,octa-cis-undecaprenyl phosphate + phosphate + H(+). Its function is as follows. Catalyzes the dephosphorylation of undecaprenyl diphosphate (UPP). Confers resistance to bacitracin. The polypeptide is Undecaprenyl-diphosphatase 2 (Bacillus licheniformis (strain ATCC 14580 / DSM 13 / JCM 2505 / CCUG 7422 / NBRC 12200 / NCIMB 9375 / NCTC 10341 / NRRL NRS-1264 / Gibson 46)).